The following is a 320-amino-acid chain: MGRTSKDKRDIFYRLAKEQGWRARSAFKLLQADETFQLLEGLTRAVDLCAAPGSWSQVLAKRLYEPLPPEEREKVKIIAVDLQGMAPIEGVKQLRADISKESTAEAIIEFFGGEKAQIVVSDGAPDSTGMHDFDSYVQGELLLSALSISTFILEEGGSFVSKIYRADRTSRLYTQLKRFFKNVCVFKPSASRNSSIEAFVVAREFCLPDGYKPCNLTTEWHDQPESWVGRKKESPPVVQVPFVAYKGELDSDRTYDLGENYVYKEPVQQPLTAAYQDILQKTSQVNIKYEGIRVIHDEEMLKKWLENDENKSEKLGACVT.

Residues Gly-53, Trp-55, Asp-81, Asp-97, and Asp-122 each coordinate S-adenosyl-L-methionine. Lys-162 serves as the catalytic Proton acceptor.

The protein belongs to the class I-like SAM-binding methyltransferase superfamily. RNA methyltransferase RlmE family. TRM7 subfamily. In terms of assembly, interacts with CG33172/WDR6.

The protein localises to the cytoplasm. It carries out the reaction cytidine(32)/guanosine(34) in tRNA + 2 S-adenosyl-L-methionine = 2'-O-methylcytidine(32)/2'-O-methylguanosine(34) in tRNA + 2 S-adenosyl-L-homocysteine + 2 H(+). In terms of biological role, methylates the 2'-O-ribose of nucleotides at position 34 of the tRNA anticodon loop of substrate tRNAs. May require WDR6 for methylation of the nucleotide at position 34 of the anticodon loop of substrate tRNAs. Plays a role in neurogenesis. Requisite for RNA-mediated gene silencing. Modifies position 34 in tRNA(Leu(CAA)), tRNA(Leu(CAG)), tRNA(Phe(GAA)), and tRNA(Trp(CCA)). This Drosophila melanogaster (Fruit fly) protein is tRNA (guanosine(34)-2'-O)-methyltransferase.